The sequence spans 648 residues: 1-deoxy-D-xylulose-5-phosphate synthase (648 aa).

Thiamine diphosphate is bound by residues His-72 and 113–115; that span reads GHA. Position 144 (Asp-144) interacts with Mg(2+). Thiamine diphosphate is bound by residues 145–146, Asn-173, and Glu-363; that span reads GA. Residue Asn-173 coordinates Mg(2+).

Belongs to the transketolase family. DXPS subfamily. Homodimer. Mg(2+) serves as cofactor. It depends on thiamine diphosphate as a cofactor.

The enzyme catalyses D-glyceraldehyde 3-phosphate + pyruvate + H(+) = 1-deoxy-D-xylulose 5-phosphate + CO2. Its pathway is metabolic intermediate biosynthesis; 1-deoxy-D-xylulose 5-phosphate biosynthesis; 1-deoxy-D-xylulose 5-phosphate from D-glyceraldehyde 3-phosphate and pyruvate: step 1/1. Catalyzes the acyloin condensation reaction between C atoms 2 and 3 of pyruvate and glyceraldehyde 3-phosphate to yield 1-deoxy-D-xylulose-5-phosphate (DXP). This Symbiobacterium thermophilum (strain DSM 24528 / JCM 14929 / IAM 14863 / T) protein is 1-deoxy-D-xylulose-5-phosphate synthase.